The chain runs to 310 residues: Olfactory receptor 7A42 (310 aa).

Topologically, residues 1-25 (MESGNSTRRIPSFFLLGFSENPHLQ) are extracellular. An N-linked (GlcNAc...) asparagine glycan is attached at asparagine 5. A helical transmembrane segment spans residues 26-46 (FLIFVLFLSMYLVTVLGNLLI). Topologically, residues 47–67 (IMVIITQSPLHTPMYFFLANL) are cytoplasmic. A helical transmembrane segment spans residues 68-88 (SFVDICFTSTTVPKMLVNIQT). The Extracellular portion of the chain corresponds to 89-100 (QSKAITYADCIS). A disulfide bridge connects residues cysteine 98 and cysteine 190. Residues 101–121 (QMSVFLVFAELDNFLLAVMAY) form a helical membrane-spanning segment. The Cytoplasmic segment spans residues 122 to 135 (DRYVAICHPLYYTF). The helical transmembrane segment at 136 to 156 (IVNQHLCILMVLLSWVVSILH) threads the bilayer. The Extracellular segment spans residues 157 to 202 (AFLQSSIVLQLTFCGDVKIPHFFCELNQLSQLTCLDSLSSHLIMNL). Residues 203–223 (VPVLLAVISFSSILYSYFKIV) traverse the membrane as a helical segment. At 224 to 240 (SSICSISSVQGKYTAFS) the chain is on the cytoplasmic side. A helical transmembrane segment spans residues 241 to 261 (TCVSHLSIVFLFYSTGLGVYV). Residues 262–272 (SSAVVQSSHSA) are Extracellular-facing. Residues 273–293 (ARASVMYTVVTPMLNPFIYSL) traverse the membrane as a helical segment. Residues 294–310 (RNKDVKKALERLLEGKL) are Cytoplasmic-facing.

Belongs to the G-protein coupled receptor 1 family.

It localises to the cell membrane. Its function is as follows. Odorant receptor. The protein is Olfactory receptor 7A42 of Mus musculus (Mouse).